The sequence spans 101 residues: Small ribosomal subunit protein uS14 (101 aa).

The tract at residues 1-22 is disordered; the sequence is MAKVSSIKKNESRKKKSQSLHN. Residues 11–22 show a composition bias toward basic residues; sequence ESRKKKSQSLHN.

This sequence belongs to the universal ribosomal protein uS14 family. In terms of assembly, part of the 30S ribosomal subunit. Contacts proteins S3 and S10.

Functionally, binds 16S rRNA, required for the assembly of 30S particles and may also be responsible for determining the conformation of the 16S rRNA at the A site. This Rickettsia conorii (strain ATCC VR-613 / Malish 7) protein is Small ribosomal subunit protein uS14.